Here is a 757-residue protein sequence, read N- to C-terminus: Protein lsd90 (757 aa).

4 stretches are compositionally biased toward polar residues: residues 1–11, 19–36, 51–69, and 94–118; these read MVGTINESMQN, TAQSAKQGIKNAGQSSSK, TAGNTANDGDSSYASSKNL, and DTSNVSPPSTQTGGYASKDTTSTYE. 4 disordered regions span residues 1–131, 224–244, 589–633, and 657–757; these read MVGT…SRSS, ERAREAQSSIERSASLREKQA, AQAE…KSKS, and AYVG…MSNK. The stretch at 166–604 forms a coiled coil; sequence DEKTLQDLLE…KVESEYNSVK (439 aa). Residues 589–598 show a composition bias toward basic and acidic residues; the sequence is AQAEQSKVES. The span at 619–632 shows a compositional bias: polar residues; sequence VTTNEPTDVSTKSK. Low complexity predominate over residues 674–693; the sequence is STPSTLPTSASTNAAATTTT. 718–725 provides a ligand contact to ATP; that stretch reads GTTGLGKS.

In terms of biological role, may be involved in the metabolism of very long-chain fatty acid-containing phospholipids (VLCFA-PL). This chain is Protein lsd90 (lsd90), found in Schizosaccharomyces pombe (strain 972 / ATCC 24843) (Fission yeast).